The sequence spans 741 residues: uncharacterized protein (741 aa).

The N-terminal stretch at 1–22 (MKSVKIIIILALALLIQISHIA) is a signal peptide.

This is an uncharacterized protein from Archaeoglobus fulgidus (strain ATCC 49558 / DSM 4304 / JCM 9628 / NBRC 100126 / VC-16).